The chain runs to 716 residues: Hepatocyte growth factor-like protein (716 aa).

The signal sequence occupies residues 1-18 (MGWLPLLLLLVQCSRALG). Residues 19 to 105 (QRSPLNDFQL…SLCHLFQKKD (87 aa)) enclose the PAN domain. Intrachain disulfides connect C56–C78, C60–C66, C110–C186, C131–C169, C157–C181, C191–C268, C194–C333, C212–C251, C240–C263, C292–C370, C313–C352, C341–C364, C379–C457, C400–C440, C428–C452, C477–C593, C512–C528, C607–C672, C637–C651, and C662–C690. N72 carries an N-linked (GlcNAc...) asparagine glycan. 4 Kringle domains span residues 110–186 (CIMD…IKTC), 191–268 (CVLC…LPSC), 292–370 (CFRG…IPRC), and 379–457 (CYHG…LQRC). The N-linked (GlcNAc...) asparagine glycan is linked to N173. Residue N305 is glycosylated (N-linked (GlcNAc...) asparagine). A Peptidase S1 domain is found at 489-714 (VVGGHPGNSP…FVDWINKVMQ (226 aa)). N-linked (GlcNAc...) asparagine glycosylation is present at N620.

The protein belongs to the peptidase S1 family. Plasminogen subfamily. Dimer of an alpha chain and a beta chain linked by a disulfide bond. Interacts (via beta chain) with MST1R (via SEMA domain). In terms of processing, cleaved after Arg-488, probably by HPN/Hepsin, to yield the active form consisting of two disulfide-linked chains. Liver. Lower levels in lung, placenta and adrenal.

Its subcellular location is the secreted. In Mus musculus (Mouse), this protein is Hepatocyte growth factor-like protein (Mst1).